The chain runs to 144 residues: UPF0102 protein sce2912 (144 aa).

The protein belongs to the UPF0102 family.

The protein is UPF0102 protein sce2912 of Sorangium cellulosum (strain So ce56) (Polyangium cellulosum (strain So ce56)).